The chain runs to 472 residues: tRNA-2-methylthio-N(6)-dimethylallyladenosine synthase (472 aa).

One can recognise an MTTase N-terminal domain in the interval Arg-22–Ala-142. Cys-31, Cys-67, Cys-105, Cys-183, Cys-187, and Cys-190 together coordinate [4Fe-4S] cluster. The region spanning Arg-169 to Ala-403 is the Radical SAM core domain. A TRAM domain is found at Glu-404–Gly-466.

It belongs to the methylthiotransferase family. MiaB subfamily. In terms of assembly, monomer. It depends on [4Fe-4S] cluster as a cofactor.

It localises to the cytoplasm. It catalyses the reaction N(6)-dimethylallyladenosine(37) in tRNA + (sulfur carrier)-SH + AH2 + 2 S-adenosyl-L-methionine = 2-methylsulfanyl-N(6)-dimethylallyladenosine(37) in tRNA + (sulfur carrier)-H + 5'-deoxyadenosine + L-methionine + A + S-adenosyl-L-homocysteine + 2 H(+). Its function is as follows. Catalyzes the methylthiolation of N6-(dimethylallyl)adenosine (i(6)A), leading to the formation of 2-methylthio-N6-(dimethylallyl)adenosine (ms(2)i(6)A) at position 37 in tRNAs that read codons beginning with uridine. This Rhizobium meliloti (strain 1021) (Ensifer meliloti) protein is tRNA-2-methylthio-N(6)-dimethylallyladenosine synthase.